The sequence spans 156 residues: Ribonuclease H (156 aa).

An RNase H type-1 domain is found at 3 to 144 (ERKLIHIFTD…CDILARSAAE (142 aa)). Mg(2+) contacts are provided by Asp-12, Glu-50, Asp-72, and Asp-136.

Belongs to the RNase H family. Monomer. Mg(2+) is required as a cofactor.

Its subcellular location is the cytoplasm. It catalyses the reaction Endonucleolytic cleavage to 5'-phosphomonoester.. Functionally, endonuclease that specifically degrades the RNA of RNA-DNA hybrids. The sequence is that of Ribonuclease H from Shewanella putrefaciens (strain CN-32 / ATCC BAA-453).